We begin with the raw amino-acid sequence, 663 residues long: Syntabulin (663 aa).

Disordered stretches follow at residues 1–202 (MGPL…PREK) and 216–267 (VNIH…PEQY). Residues 2–417 (GPLRESKKEH…DTMADGLSLE (416 aa)) form a sufficient for interaction with KIF5B region. S50 carries the post-translational modification Phosphoserine. Positions 57–73 (FNPSSSGRSARTVSSNS) are enriched in low complexity. Residues 81 to 97 (CPSSQSVSPVKTPSDAG) show a composition bias toward polar residues. S107 is modified (phosphoserine). Low complexity-rich tracts occupy residues 145-158 (EADF…GSIS), 188-198 (SSHKPGSSPSS), and 221-241 (SYAP…SDCS). Residues 271-353 (LQQKEVTVRH…MRSSLADKDK (83 aa)) are a coiled coil. The sufficient for interaction with STX1A stretch occupies residues 310–417 (REDWIEEECH…DTMADGLSLE (108 aa)). Phosphoserine is present on residues S396 and S555. A helical transmembrane segment spans residues 606–626 (SFLVDLLAVAAPVVPTVLWAF).

As to quaternary structure, interacts with STX1A and KIF5B. Isoform 3, isoform 4 and isoform 5 are expressed in HeLa cell line (at protein level). Isoform 3 is expressed in fetal and adult brain. Isoform 4 is expressed in numerous fetal tissues (brain, kidney, liver, lung, and thymus) and in adult brain, kidney, liver, lung, pancreas, colon, prostate, small intestine, testis and thymus. Isoform 5 is expressed in fetal brain, brain and small intestine.

It localises to the cytoplasm. It is found in the cytoskeleton. The protein localises to the cytoplasmic vesicle. Its subcellular location is the golgi apparatus membrane. In terms of biological role, part of a kinesin motor-adapter complex that is critical for the anterograde axonal transport of active zone components and contributes to activity-dependent presynaptic assembly during neuronal development. The sequence is that of Syntabulin (SYBU) from Homo sapiens (Human).